Consider the following 457-residue polypeptide: Metacaspase-1 (457 aa).

The segment at 1–149 (MSWNQYPGGG…PQLQGQGGQS (149 aa)) is disordered. The segment covering 7-18 (PGGGHHQQGGYG) has biased composition (gly residues). The span at 20-56 (RPPPPQWAQQGPPPPPNMGYRPPPPPQAYYNNPPPPQ) shows a compositional bias: pro residues. Residues 57–83 (QYQRPAPQQNGYQQGGYQQQQQSQGNY) are compositionally biased toward low complexity. Catalysis depends on residues H247 and C303.

It belongs to the peptidase C14B family.

In terms of biological role, involved in cell death (apoptosis). This Cryptococcus neoformans var. neoformans serotype D (strain JEC21 / ATCC MYA-565) (Filobasidiella neoformans) protein is Metacaspase-1 (MCA1).